The sequence spans 264 residues: MKEYLNFLQFILDHGVAKTDRTGIGTKSVFGYEMRFNLREGFPLVTTKKIHLKSVIYELLWFLRGDTNIQFLNDNGVTIWDEWADENGDLGPIYGKQWRRWHCPDGRTVDQMQRLIREIKTNPDSRRLIVSAWNVGELDQMALPPCHLLFQFYVADGFLSCKLTQRSADAFLGVPFNIASYSLLTHLIARQCNLKAGEFIWSGGDCHIYNTHQDQVSTQLSREPRALPQLIINRDPSSLYDYNFNDFSIVNYHPHPAIKAPVAV.

Arginine 21 contacts dUMP. Residue histidine 51 participates in (6R)-5,10-methylene-5,6,7,8-tetrahydrofolate binding. 126–127 provides a ligand contact to dUMP; that stretch reads RR. Cysteine 146 serves as the catalytic Nucleophile. DUMP is bound by residues 166 to 169, asparagine 177, and 207 to 209; these read RSAD and HIY. (6R)-5,10-methylene-5,6,7,8-tetrahydrofolate is bound at residue aspartate 169. Residue alanine 263 coordinates (6R)-5,10-methylene-5,6,7,8-tetrahydrofolate.

The protein belongs to the thymidylate synthase family. Bacterial-type ThyA subfamily. As to quaternary structure, homodimer.

The protein resides in the cytoplasm. It carries out the reaction dUMP + (6R)-5,10-methylene-5,6,7,8-tetrahydrofolate = 7,8-dihydrofolate + dTMP. The protein operates within pyrimidine metabolism; dTTP biosynthesis. Its function is as follows. Catalyzes the reductive methylation of 2'-deoxyuridine-5'-monophosphate (dUMP) to 2'-deoxythymidine-5'-monophosphate (dTMP) while utilizing 5,10-methylenetetrahydrofolate (mTHF) as the methyl donor and reductant in the reaction, yielding dihydrofolate (DHF) as a by-product. This enzymatic reaction provides an intracellular de novo source of dTMP, an essential precursor for DNA biosynthesis. The chain is Thymidylate synthase from Coxiella burnetii (strain Dugway 5J108-111).